A 463-amino-acid chain; its full sequence is MAASMFYGRLVAVATLRNHRPRTAQRAAAQVLGSSGLFNNHGLQVQQQQQRNLSLHEYMSMELLQEAGVSVPKGYVAKSPDEAYAIAKKLGSKDVVIKAQVLAGGRGKGTFESGLKGGVKIVFSPEEAKAVSSQMIGKKLFTKQTGEKGRICNQVLVCERKYPRREYYFAITMERSFQGPVLIGSSHGGVNIEDVAAESPEAIIKEPIDIEEGIKKEQALQLAQKMGFPPNIVESAAENMVKLYSLFLKYDATMIEINPMVEDSDGAVLCMDAKINFDSNSAYRQKKIFDLQDWTQEDERDKDAAKANLNYIGLDGNIGCLVNGAGLAMATMDIIKLHGGTPANFLDVGGGATVHQVTEAFKLITSDKKVLAILVNIFGGIMRCDVIAQGIVMAVKDLEIKIPVVVRLQGTRVDDAKALIADSGLKILACDDLDEAARMVVKLSEIVTLAKQAHVDVKFQLPI.

The transit peptide at 1–52 directs the protein to the mitochondrion; sequence MAASMFYGRLVAVATLRNHRPRTAQRAAAQVLGSSGLFNNHGLQVQQQQQRN. An ATP-grasp domain is found at 61-288; that stretch reads MELLQEAGVS…SNSAYRQKKI (228 aa). Lysine 78 bears the N6-acetyllysine mark. The residue at position 84 (tyrosine 84) is a Phosphotyrosine. N6-acetyllysine; alternate is present on lysine 88. Lysine 88 is subject to N6-succinyllysine; alternate. Residues lysine 98 and 105 to 107 contribute to the ATP site; that span reads GRG. Residues lysine 129, lysine 139, lysine 143, and lysine 216 each carry the N6-acetyllysine modification. Residues asparagine 258 and aspartate 272 each contribute to the Mg(2+) site. Serine 279 is subject to Phosphoserine. Asparagine 323 is a binding site for substrate. Threonine 341 is subject to Phosphothreonine. Position 368 is an N6-acetyllysine (lysine 368). 380 to 382 is a binding site for substrate; sequence GIM.

It belongs to the succinate/malate CoA ligase beta subunit family. ATP-specific subunit beta subfamily. As to quaternary structure, heterodimer of an alpha and a beta subunit. The beta subunit determines specificity for ATP. Interacts with ALAS2. Mg(2+) serves as cofactor. In terms of tissue distribution, widely expressed. Not expressed in liver and lung.

The protein resides in the mitochondrion. The enzyme catalyses succinate + ATP + CoA = succinyl-CoA + ADP + phosphate. Its pathway is carbohydrate metabolism; tricarboxylic acid cycle; succinate from succinyl-CoA (ligase route): step 1/1. With respect to regulation, inhibited by itaconate. Functionally, ATP-specific succinyl-CoA synthetase functions in the citric acid cycle (TCA), coupling the hydrolysis of succinyl-CoA to the synthesis of ATP and thus represents the only step of substrate-level phosphorylation in the TCA. The beta subunit provides nucleotide specificity of the enzyme and binds the substrate succinate, while the binding sites for coenzyme A and phosphate are found in the alpha subunit. The protein is Succinate--CoA ligase [ADP-forming] subunit beta, mitochondrial of Homo sapiens (Human).